The sequence spans 256 residues: UPF0280 protein MTH_727 (256 aa).

It belongs to the UPF0280 family.

This Methanothermobacter thermautotrophicus (strain ATCC 29096 / DSM 1053 / JCM 10044 / NBRC 100330 / Delta H) (Methanobacterium thermoautotrophicum) protein is UPF0280 protein MTH_727.